Consider the following 501-residue polypeptide: Dihydrolipoyl dehydrogenase, mitochondrial (501 aa).

Residues M1–F31 constitute a mitochondrion transit peptide. Residues E67–C76, K85, G149, and T178–S180 contribute to the FAD site. Cysteines 76 and 81 form a disulfide. Residues G215 to E222, E238, V272, and G307 contribute to the NAD(+) site. FAD is bound by residues D348 and M354–H357. Residue H480 is the Proton acceptor of the active site.

Belongs to the class-I pyridine nucleotide-disulfide oxidoreductase family. As to quaternary structure, homodimer. It depends on FAD as a cofactor.

The protein resides in the mitochondrion matrix. It catalyses the reaction N(6)-[(R)-dihydrolipoyl]-L-lysyl-[protein] + NAD(+) = N(6)-[(R)-lipoyl]-L-lysyl-[protein] + NADH + H(+). Functionally, lipoamide dehydrogenase is a component of the glycine cleavage system as well as of the alpha-ketoacid dehydrogenase complexes. The pyruvate dehydrogenase complex contains multiple copies of three enzymatic components: pyruvate dehydrogenase (E1), dihydrolipoamide acetyltransferase (E2) and lipoamide dehydrogenase (E3). This chain is Dihydrolipoyl dehydrogenase, mitochondrial (LPD), found in Pisum sativum (Garden pea).